The sequence spans 156 residues: ATP synthase subunit b (156 aa).

The chain crosses the membrane as a helical span at residues Ala-11–Ala-31.

Belongs to the ATPase B chain family. As to quaternary structure, F-type ATPases have 2 components, F(1) - the catalytic core - and F(0) - the membrane proton channel. F(1) has five subunits: alpha(3), beta(3), gamma(1), delta(1), epsilon(1). F(0) has three main subunits: a(1), b(2) and c(10-14). The alpha and beta chains form an alternating ring which encloses part of the gamma chain. F(1) is attached to F(0) by a central stalk formed by the gamma and epsilon chains, while a peripheral stalk is formed by the delta and b chains.

The protein localises to the cell inner membrane. F(1)F(0) ATP synthase produces ATP from ADP in the presence of a proton or sodium gradient. F-type ATPases consist of two structural domains, F(1) containing the extramembraneous catalytic core and F(0) containing the membrane proton channel, linked together by a central stalk and a peripheral stalk. During catalysis, ATP synthesis in the catalytic domain of F(1) is coupled via a rotary mechanism of the central stalk subunits to proton translocation. Functionally, component of the F(0) channel, it forms part of the peripheral stalk, linking F(1) to F(0). This Erwinia tasmaniensis (strain DSM 17950 / CFBP 7177 / CIP 109463 / NCPPB 4357 / Et1/99) protein is ATP synthase subunit b.